The primary structure comprises 667 residues: Bifunctional polymyxin resistance protein ArnA (667 aa).

The tract at residues 1–304 (MKAIVFAYHD…EMGIVTDVRL (304 aa)) is formyltransferase ArnAFT. Histidine 104 serves as the catalytic Proton donor; for formyltransferase activity. (6R)-10-formyltetrahydrofolate-binding positions include arginine 114 and 136–140 (VKKAD). The interval 314–667 (RRTRVLILGV…TAAPKDELNA (354 aa)) is dehydrogenase ArnADH. Residues aspartate 347 and 368 to 369 (DI) each bind NAD(+). UDP-alpha-D-glucuronate-binding positions include alanine 393, tyrosine 398, and 432-433 (TS). The active-site Proton acceptor; for decarboxylase activity is the glutamate 434. Residues arginine 460, asparagine 492, 526–535 (KLVDGGAQKR), and tyrosine 613 contribute to the UDP-alpha-D-glucuronate site. The active-site Proton donor; for decarboxylase activity is arginine 619.

It in the N-terminal section; belongs to the Fmt family. UDP-L-Ara4N formyltransferase subfamily. In the C-terminal section; belongs to the NAD(P)-dependent epimerase/dehydratase family. UDP-glucuronic acid decarboxylase subfamily. In terms of assembly, homohexamer, formed by a dimer of trimers.

It carries out the reaction UDP-alpha-D-glucuronate + NAD(+) = UDP-beta-L-threo-pentopyranos-4-ulose + CO2 + NADH. It catalyses the reaction UDP-4-amino-4-deoxy-beta-L-arabinose + (6R)-10-formyltetrahydrofolate = UDP-4-deoxy-4-formamido-beta-L-arabinose + (6S)-5,6,7,8-tetrahydrofolate + H(+). It functions in the pathway nucleotide-sugar biosynthesis; UDP-4-deoxy-4-formamido-beta-L-arabinose biosynthesis; UDP-4-deoxy-4-formamido-beta-L-arabinose from UDP-alpha-D-glucuronate: step 1/3. Its pathway is nucleotide-sugar biosynthesis; UDP-4-deoxy-4-formamido-beta-L-arabinose biosynthesis; UDP-4-deoxy-4-formamido-beta-L-arabinose from UDP-alpha-D-glucuronate: step 3/3. It participates in bacterial outer membrane biogenesis; lipopolysaccharide biosynthesis. Bifunctional enzyme that catalyzes the oxidative decarboxylation of UDP-glucuronic acid (UDP-GlcUA) to UDP-4-keto-arabinose (UDP-Ara4O) and the addition of a formyl group to UDP-4-amino-4-deoxy-L-arabinose (UDP-L-Ara4N) to form UDP-L-4-formamido-arabinose (UDP-L-Ara4FN). The modified arabinose is attached to lipid A and is required for resistance to polymyxin and cationic antimicrobial peptides. This chain is Bifunctional polymyxin resistance protein ArnA, found in Yersinia pestis bv. Antiqua (strain Antiqua).